The chain runs to 929 residues: von Willebrand factor C and EGF domain-containing protein (929 aa).

Residues 1-21 (MWARLLLHVAYILIPLLGSSA) form the signal peptide. In terms of domain architecture, EGF-like 1 spans 70 to 98 (LCSFGCGSGICIAPNVCSCQDGEQGATCP). The 39-residue stretch at 142 to 180 (DIDECLSSSCEGHCVNTEGGFVCECGPGMQLSADRHSCQ) folds into the EGF-like 2; calcium-binding domain. Disulfide bonds link C146–C155, C151–C164, C166–C179, C185–C194, C190–C203, C205–C218, C224–C237, C233–C246, and C248–C261. Residues 181 to 219 (DTDECLGTPCQQRCKNSIGSYKCSCRAGFHLHGNRHSCI) form the EGF-like 3; calcium-binding domain. The EGF-like 4; calcium-binding domain occupies 220-262 (DVNECRRPQERRVCHHTCHNTVGSFLCTCRPGFRLRSDRVSCE). Disordered stretches follow at residues 291 to 317 (AGRPALSPGHSPPPGAPGYPTGVRTIS) and 339 to 374 (PSSSPLGTLGPPSLLQGAVGTPSSPRGPESPKLGAG). Residues 339-353 (PSSSPLGTLGPPSLL) show a composition bias toward low complexity. VWFC domains are found at residues 376–433 (SSCW…PSCT), 433–494 (TGCF…GRCY), 491–552 (GRCY…FTCR), 558–618 (TGCS…PDCS), 619–677 (AGCT…PVCH), and 677–762 (HDCN…VNCS). N454 and N464 each carry an N-linked (GlcNAc...) asparagine glycan. A disordered region spans residues 731–774 (PLEEKQQPSPHGELAKAARNARGDTEVPVNCSSCPGPPSASPTR). The span at 743-755 (ELAKAARNARGDT) shows a compositional bias: basic and acidic residues. N787 carries an N-linked (GlcNAc...) asparagine glycan. Positions 791 to 807 (IQSASPSPPIAQTSSSP) are enriched in polar residues. Disordered regions lie at residues 791-861 (IQSA…SSTF) and 879-929 (AETP…NSTI). Low complexity predominate over residues 889–903 (LSETLTTSSSSQRLS).

The protein resides in the secreted. In terms of biological role, may be a regulatory element in the beta-catenin signaling pathway and a target for chemoprevention of hapatocellular carcinoma. In Mus musculus (Mouse), this protein is von Willebrand factor C and EGF domain-containing protein (Vwce).